A 134-amino-acid polypeptide reads, in one-letter code: MIELDYVKGEDTIVEATSTSPWLMRSPLARAAEKRGSGLFFDINEGHGQHRDVIVAYGVSKPKRRSPHPHGNKAADKRKTTEKEPERKKRVGAPRTCKKICIQLLYRFNFTVLGIGNVCNIDLLLGTVSATNAI.

The segment at 59-92 (VSKPKRRSPHPHGNKAADKRKTTEKEPERKKRVG) is disordered. The span at 61-71 (KPKRRSPHPHG) shows a compositional bias: basic residues. Basic and acidic residues predominate over residues 73-87 (KAADKRKTTEKEPER).

This is an uncharacterized protein from Saccharomyces cerevisiae (strain ATCC 204508 / S288c) (Baker's yeast).